The chain runs to 56 residues: Large ribosomal subunit protein bL33 (56 aa).

A compositionally biased stretch (basic and acidic residues) spans 1-12 (MATKGGREKIKL). Residues 1–28 (MATKGGREKIKLESTAGTGHFYTTSKNK) are disordered. Positions 15 to 25 (TAGTGHFYTTS) are enriched in polar residues.

It belongs to the bacterial ribosomal protein bL33 family.

The polypeptide is Large ribosomal subunit protein bL33 (Albidiferax ferrireducens (strain ATCC BAA-621 / DSM 15236 / T118) (Rhodoferax ferrireducens)).